The sequence spans 524 residues: Cytochrome P450 4F12 (524 aa).

A run of 2 helical transmembrane segments spans residues 19 to 39 and 87 to 107; these read WLLL…AWTY and GFTV…PDTI. Residue C468 coordinates heme.

It belongs to the cytochrome P450 family. Heme serves as cofactor. In terms of tissue distribution, expressed in small intestine, liver, colon and heart.

It is found in the endoplasmic reticulum membrane. The protein resides in the microsome membrane. The catalysed reaction is an organic molecule + reduced [NADPH--hemoprotein reductase] + O2 = an alcohol + oxidized [NADPH--hemoprotein reductase] + H2O + H(+). The enzyme catalyses (5Z,8Z,11Z,14Z)-eicosatetraenoate + reduced [NADPH--hemoprotein reductase] + O2 = 18-hydroxy-(5Z,8Z,11Z,14Z)-eicosatetraenoate + oxidized [NADPH--hemoprotein reductase] + H2O + H(+). It carries out the reaction (7Z,10Z,13Z,16Z,19Z)-docosapentaenoate + reduced [NADPH--hemoprotein reductase] + O2 = 10,11-epoxy-(7Z,13Z,16Z,19Z)-docosatetraenoate + oxidized [NADPH--hemoprotein reductase] + H2O + H(+). It catalyses the reaction (7Z,10Z,13Z,16Z,19Z)-docosapentaenoate + reduced [NADPH--hemoprotein reductase] + O2 = 13,14-epoxy-(7Z,10Z,16Z,19Z)-docosatetraenoate + oxidized [NADPH--hemoprotein reductase] + H2O + H(+). The catalysed reaction is (7Z,10Z,13Z,16Z,19Z)-docosapentaenoate + reduced [NADPH--hemoprotein reductase] + O2 = 16,17-epoxy-(7Z,10Z,13Z,19Z)-docosatetraenoate + oxidized [NADPH--hemoprotein reductase] + H2O + H(+). The enzyme catalyses (7Z,10Z,13Z,16Z,19Z)-docosapentaenoate + reduced [NADPH--hemoprotein reductase] + O2 = 19,20-epoxy-(7Z,10Z,13Z,16Z)-docosatetraenoate + oxidized [NADPH--hemoprotein reductase] + H2O + H(+). It carries out the reaction (4Z,7Z,10Z,13Z,16Z,19Z)-docosahexaenoate + reduced [NADPH--hemoprotein reductase] + O2 = 10,11-epoxy-(4Z,7Z,13Z,16Z,19Z)-docosapentaenoate + oxidized [NADPH--hemoprotein reductase] + H2O + H(+). It catalyses the reaction (4Z,7Z,10Z,13Z,16Z,19Z)-docosahexaenoate + reduced [NADPH--hemoprotein reductase] + O2 = 13,14-epoxy-(4Z,7Z,10Z,16Z,19Z)-docosapentaenoate + oxidized [NADPH--hemoprotein reductase] + H2O + H(+). The catalysed reaction is (4Z,7Z,10Z,13Z,16Z,19Z)-docosahexaenoate + reduced [NADPH--hemoprotein reductase] + O2 = 16,17-epoxy-(4Z,7Z,10Z,13Z,19Z)-docosapentaenoate + oxidized [NADPH--hemoprotein reductase] + H2O + H(+). The enzyme catalyses (4Z,7Z,10Z,13Z,16Z,19Z)-docosahexaenoate + reduced [NADPH--hemoprotein reductase] + O2 = 19,20-epoxy-(4Z,7Z,10Z,13Z,16Z)-docosapentaenoate + oxidized [NADPH--hemoprotein reductase] + H2O + H(+). The protein operates within lipid metabolism; arachidonate metabolism. In terms of biological role, a cytochrome P450 monooxygenase involved in the metabolism of endogenous polyunsaturated fatty acids (PUFAs). Mechanistically, uses molecular oxygen inserting one oxygen atom into a substrate, and reducing the second into a water molecule, with two electrons provided by NADPH via cytochrome P450 reductase (CPR; NADPH-ferrihemoprotein reductase). Catalyzes the hydroxylation of carbon hydrogen bonds, with preference for omega-2 position. Metabolizes (5Z,8Z,11Z,14Z)-eicosatetraenoic acid (arachidonate) toward 18-hydroxy arachidonate. Catalyzes the epoxidation of double bonds of PUFAs such as docosapentaenoic and docosahexaenoic acids. Has low omega-hydroxylase activity toward leukotriene B4 and arachidonate. Involved in the metabolism of xenobiotics. Catalyzes the hydroxylation of the antihistamine drug ebastine. In Homo sapiens (Human), this protein is Cytochrome P450 4F12.